A 454-amino-acid polypeptide reads, in one-letter code: Bifunctional protein GlmU (454 aa).

A pyrophosphorylase region spans residues 1–228 (MNKCAIILAA…FEETLGVNSR (228 aa)). UDP-N-acetyl-alpha-D-glucosamine-binding positions include 8 to 11 (LAAG), K22, Q73, and 78 to 79 (GT). Residue D103 participates in Mg(2+) binding. UDP-N-acetyl-alpha-D-glucosamine is bound by residues G140, E154, N169, and N226. N226 lines the Mg(2+) pocket. Residues 229 to 249 (AELAKVESIMRNRINRTHLDN) are linker. The interval 250-454 (GVTIIDPLNT…EGWVERKKLK (205 aa)) is N-acetyltransferase. Residues R331 and K349 each coordinate UDP-N-acetyl-alpha-D-glucosamine. The Proton acceptor role is filled by H361. Residues Y364 and N375 each coordinate UDP-N-acetyl-alpha-D-glucosamine. Acetyl-CoA contacts are provided by residues 384–385 (NY), A421, and R438.

This sequence in the N-terminal section; belongs to the N-acetylglucosamine-1-phosphate uridyltransferase family. The protein in the C-terminal section; belongs to the transferase hexapeptide repeat family. Homotrimer. It depends on Mg(2+) as a cofactor.

The protein resides in the cytoplasm. The enzyme catalyses alpha-D-glucosamine 1-phosphate + acetyl-CoA = N-acetyl-alpha-D-glucosamine 1-phosphate + CoA + H(+). It catalyses the reaction N-acetyl-alpha-D-glucosamine 1-phosphate + UTP + H(+) = UDP-N-acetyl-alpha-D-glucosamine + diphosphate. It participates in nucleotide-sugar biosynthesis; UDP-N-acetyl-alpha-D-glucosamine biosynthesis; N-acetyl-alpha-D-glucosamine 1-phosphate from alpha-D-glucosamine 6-phosphate (route II): step 2/2. Its pathway is nucleotide-sugar biosynthesis; UDP-N-acetyl-alpha-D-glucosamine biosynthesis; UDP-N-acetyl-alpha-D-glucosamine from N-acetyl-alpha-D-glucosamine 1-phosphate: step 1/1. It functions in the pathway bacterial outer membrane biogenesis; LPS lipid A biosynthesis. Functionally, catalyzes the last two sequential reactions in the de novo biosynthetic pathway for UDP-N-acetylglucosamine (UDP-GlcNAc). The C-terminal domain catalyzes the transfer of acetyl group from acetyl coenzyme A to glucosamine-1-phosphate (GlcN-1-P) to produce N-acetylglucosamine-1-phosphate (GlcNAc-1-P), which is converted into UDP-GlcNAc by the transfer of uridine 5-monophosphate (from uridine 5-triphosphate), a reaction catalyzed by the N-terminal domain. The polypeptide is Bifunctional protein GlmU (Clostridium perfringens (strain SM101 / Type A)).